Here is a 270-residue protein sequence, read N- to C-terminus: Putative carbamate hydrolase RutD (270 aa).

It belongs to the AB hydrolase superfamily. Hydrolase RutD family.

It catalyses the reaction carbamate + 2 H(+) = NH4(+) + CO2. In terms of biological role, involved in pyrimidine catabolism. May facilitate the hydrolysis of carbamate, a reaction that can also occur spontaneously. The protein is Putative carbamate hydrolase RutD of Escherichia coli O44:H18 (strain 042 / EAEC).